A 102-amino-acid chain; its full sequence is Large ribosomal subunit protein mL63 (102 aa).

This sequence belongs to the mitochondrion-specific ribosomal protein mL63 family. Component of the mitochondrial large ribosomal subunit (mt-LSU). Mature mammalian 55S mitochondrial ribosomes consist of a small (28S) and a large (39S) subunit. The 28S small subunit contains a 12S ribosomal RNA (12S mt-rRNA) and 30 different proteins. The 39S large subunit contains a 16S rRNA (16S mt-rRNA), a copy of mitochondrial valine transfer RNA (mt-tRNA(Val)), which plays an integral structural role, and 52 different proteins.

It is found in the mitochondrion. This chain is Large ribosomal subunit protein mL63 (MRPL57), found in Homo sapiens (Human).